The sequence spans 378 residues: Polar flagellin B/D (378 aa).

2 coiled-coil regions span residues 103–128 and 311–340; these read SNSK…RIAE and AFQN…IKDT.

This sequence belongs to the bacterial flagellin family. As to quaternary structure, heteromer of multiple flagellin subunits including FlaA, FlaB/D, FlaC, FlaE and FlaF.

It localises to the secreted. It is found in the bacterial flagellum. Its function is as follows. Flagellin is the subunit protein which polymerizes to form the filaments of bacterial flagella. FlaB/D is not essential for polar flagellar synthesis and swimming motility. Homomer of FlaB/D is not able to form a functional filament. The polypeptide is Polar flagellin B/D (flaB) (Vibrio parahaemolyticus serotype O3:K6 (strain RIMD 2210633)).